Reading from the N-terminus, the 304-residue chain is D-alanine--D-alanine ligase (304 aa).

One can recognise an ATP-grasp domain in the interval 103 to 299 (KLIWQALGLP…FADLCIEILK (197 aa)). 129-184 (EEKLGLPMFVKPAAEGSSVGVVKVKGKGRLKSVYEELKHFQGEIIAERFIGGGEYS) is a binding site for ATP. Positions 253, 266, and 268 each coordinate Mg(2+).

The protein belongs to the D-alanine--D-alanine ligase family. Mg(2+) serves as cofactor. The cofactor is Mn(2+).

Its subcellular location is the cytoplasm. It catalyses the reaction 2 D-alanine + ATP = D-alanyl-D-alanine + ADP + phosphate + H(+). The protein operates within cell wall biogenesis; peptidoglycan biosynthesis. Cell wall formation. The protein is D-alanine--D-alanine ligase of Neisseria meningitidis serogroup A / serotype 4A (strain DSM 15465 / Z2491).